The chain runs to 219 residues: Steroid receptor RNA activator 1 (219 aa).

Disordered stretches follow at residues 1–90 and 192–219; these read MAEL…SSPV and SLSSEENKEEKSTVAPENQTIPGFQPSS. A compositionally biased stretch (polar residues) spans 23–32; sequence YGLQTQTGGT. S48 bears the Phosphoserine mark. The span at 55 to 76 shows a compositional bias: pro residues; sequence SGPPPVDHPPPSSKASRPPPMG. Basic and acidic residues predominate over residues 192 to 203; sequence SLSSEENKEEKS. The span at 206–219 shows a compositional bias: polar residues; sequence APENQTIPGFQPSS.

This sequence belongs to the SRA1 family. SRA1 RNA exists in a ribonucleoprotein complex containing NCOA1. The RNA also forms a complex with PUS1 and RARG in the nucleus. Interacts with AR. Expressed in various prostate cancer cell lines.

It is found in the nucleus. The protein resides in the cytoplasm. Its function is as follows. Functional RNA which acts as a transcriptional coactivator that selectively enhances steroid receptor-mediated transactivation ligand-independently through a mechanism involving the modulating N-terminal domain (AF-1) of steroid receptors. Also mediates transcriptional coactivation of steroid receptors ligand-dependently through the steroid-binding domain (AF-2). Enhances cellular proliferation and differentiation and promotes apoptosis in vivo. May play a role in tumorigenesis. The chain is Steroid receptor RNA activator 1 from Rattus norvegicus (Rat).